The chain runs to 110 residues: UPF0060 membrane protein Francci3_2786 (110 aa).

The next 4 membrane-spanning stretches (helical) occupy residues 8 to 28 (LLFVVAAVTEIGGAWLVWQGV), 33 to 53 (GPVWVGLGIGFLAAYGFVATL), 62 to 82 (ILAAYGGVFVAGSLLWGVAVD), and 87 to 107 (DRYDLAGAAICLLGVAVIMYA).

The protein belongs to the UPF0060 family.

Its subcellular location is the cell membrane. This Frankia casuarinae (strain DSM 45818 / CECT 9043 / HFP020203 / CcI3) protein is UPF0060 membrane protein Francci3_2786.